The following is a 493-amino-acid chain: tRNA-2-methylthio-N(6)-dimethylallyladenosine synthase (493 aa).

Polar residues predominate over residues 1–14 (MPMTGLLQTTLSTA). The interval 1–31 (MPMTGLLQTTLSTADQDRSGPAATTGDTPAR) is disordered. The region spanning 35–155 (KRLHVITWGC…LGGMVRRAMN (121 aa)) is the MTTase N-terminal domain. Residues Cys-44, Cys-80, Cys-118, Cys-199, Cys-203, and Cys-206 each contribute to the [4Fe-4S] cluster site. In terms of domain architecture, Radical SAM core spans 185 to 417 (LAGGRTAFLT…QALLRTQQEA (233 aa)). One can recognise a TRAM domain in the interval 420 to 482 (TACIGKTVNV…TNSLSATLPD (63 aa)).

This sequence belongs to the methylthiotransferase family. MiaB subfamily. Monomer. [4Fe-4S] cluster serves as cofactor.

It is found in the cytoplasm. The catalysed reaction is N(6)-dimethylallyladenosine(37) in tRNA + (sulfur carrier)-SH + AH2 + 2 S-adenosyl-L-methionine = 2-methylsulfanyl-N(6)-dimethylallyladenosine(37) in tRNA + (sulfur carrier)-H + 5'-deoxyadenosine + L-methionine + A + S-adenosyl-L-homocysteine + 2 H(+). Catalyzes the methylthiolation of N6-(dimethylallyl)adenosine (i(6)A), leading to the formation of 2-methylthio-N6-(dimethylallyl)adenosine (ms(2)i(6)A) at position 37 in tRNAs that read codons beginning with uridine. This is tRNA-2-methylthio-N(6)-dimethylallyladenosine synthase from Granulibacter bethesdensis (strain ATCC BAA-1260 / CGDNIH1).